The sequence spans 379 residues: Glutamate 5-kinase (379 aa).

Lysine 19 contacts ATP. Serine 59, aspartate 146, and asparagine 158 together coordinate substrate. Residues 178 to 179 (TD) and 220 to 226 (TGGMATK) contribute to the ATP site. The PUA domain occupies 285–363 (SGDIIIDDGA…KDIISILGHD (79 aa)).

This sequence belongs to the glutamate 5-kinase family.

Its subcellular location is the cytoplasm. It catalyses the reaction L-glutamate + ATP = L-glutamyl 5-phosphate + ADP. It functions in the pathway amino-acid biosynthesis; L-proline biosynthesis; L-glutamate 5-semialdehyde from L-glutamate: step 1/2. Catalyzes the transfer of a phosphate group to glutamate to form L-glutamate 5-phosphate. This chain is Glutamate 5-kinase, found in Vibrio campbellii (strain ATCC BAA-1116).